Reading from the N-terminus, the 419-residue chain is MTTQLEQAWELAKQRFAAVGIDVEEALRQLDRLPVSMHCWQGDDVSGFENPEGSLTGGIQATGNYPGKARNASELRTDLEQAMRLIPGPKRLNLHAIYLESDTPVSRDQIKPEHFKNWVEWAKANQLGLDFNPSCFSHPLSADGFTLSHADDSIRQFWIDHCKASRRVSAYFGEQLGTPSVMNIWIPDGMKDITVDRLAPRQRLLAALDEVISEKLNPAHHIDAVESKLFGIGAESYTVGSNEFYMGYATSRQTALCLDAGHFHPTEVISDKISAAMLYVPQLLLHVSRPVRWDSDHVVLLDDETQAIASEIVRHDLFDRVHIGLDFFDASINRIAAWVIGTRNMKKALLRALLEPTAELRKLEAAGDYTARLALLEEQKSLSWQAVWEMYCQRHDTPTGSEWLESVRAYEKAILSQRG.

Mn(2+) contacts are provided by histidine 262, aspartate 294, and aspartate 296.

Belongs to the rhamnose isomerase family. In terms of assembly, homotetramer. The cofactor is Mn(2+).

The protein localises to the cytoplasm. It carries out the reaction L-rhamnopyranose = L-rhamnulose. The protein operates within carbohydrate degradation; L-rhamnose degradation; glycerone phosphate from L-rhamnose: step 1/3. Functionally, catalyzes the interconversion of L-rhamnose and L-rhamnulose. This Escherichia coli O139:H28 (strain E24377A / ETEC) protein is L-rhamnose isomerase.